We begin with the raw amino-acid sequence, 164 residues long: Putative HTH-type transcriptional regulator ORF2 (164 aa).

The region spanning 2–131 (RLTTKGRYAV…SGISLADLVA (130 aa)) is the HTH rrf2-type domain.

This is Putative HTH-type transcriptional regulator ORF2 from Azotobacter vinelandii.